The following is a 1624-amino-acid chain: ATP-binding cassette sub-family A member 6 (1624 aa).

A helical membrane pass occupies residues 31-51 (LLEWSIPIIIGLHMGLFSYLA). 2 N-linked (GlcNAc...) asparagine glycosylation sites follow: asparagine 84 and asparagine 91. 6 helical membrane passes run 222-242 (IFIL…SSNV), 267-287 (WGLI…IIIT), 297-317 (FLVI…VTFL), 326-346 (VLTN…GFTV), 356-376 (EWVL…KVIF), and 395-415 (VMIA…VLAL). Residues 478 to 713 (IRIRNIKKEY…WGLGYHLSLF (236 aa)) form the ABC transporter 1 domain. Position 514–521 (514–521 (GHSGAGKS)) interacts with ATP. N-linked (GlcNAc...) asparagine glycosylation occurs at asparagine 576. 8 consecutive transmembrane segments (helical) span residues 854-874 (AFLI…IEYV), 971-991 (LHCF…MLNH), 1005-1025 (FIVL…CVIC), 1058-1078 (WCGQ…TSYF), 1094-1114 (IVFS…FLTY), 1130-1150 (WSIC…NGPF), 1154-1174 (LVIS…LVVL), and 1194-1214 (AVDL…IFVL). Residues 1282-1520 (LHKEYAGQKK…FGQDYVLELR (239 aa)) form the ABC transporter 2 domain. 1320–1327 (GPDGAGKS) contributes to the ATP binding site.

Belongs to the ABC transporter superfamily. ABCA family. Widely expressed with higher expression in heart, lung, brain, spleen and testis.

The protein resides in the golgi apparatus membrane. Functionally, probable transporter which may play a role in macrophage lipid transport and homeostasis. This is ATP-binding cassette sub-family A member 6 (Abca6) from Mus musculus (Mouse).